A 307-amino-acid chain; its full sequence is Transcription factor MYB78 (307 aa).

2 consecutive HTH myb-type domains span residues 23 to 79 (EMDV…RPDV) and 80 to 130 (RRGN…QKHA). 2 consecutive DNA-binding regions (H-T-H motif) follow at residues 51-75 (WNSLARCAELKRTGKSCRLRWLNYL) and 103-126 (WSKIAQYLPGRTDNEIKNYWRTRV).

The protein resides in the nucleus. The polypeptide is Transcription factor MYB78 (Arabidopsis thaliana (Mouse-ear cress)).